The sequence spans 203 residues: Inactive ribonuclease-like protein 9 (203 aa).

A signal peptide spans 1-25 (MRTPITTHSLLLLLLLQQLLQPVQL). Intrachain disulfides connect C96/C151, C114/C166, and C121/C128. N129 and N141 each carry an N-linked (GlcNAc...) asparagine glycan.

The protein belongs to the pancreatic ribonuclease family.

Its subcellular location is the secreted. In terms of biological role, does not exhibit any ribonuclease activity. The sequence is that of Inactive ribonuclease-like protein 9 (RNASE9) from Macaca assamensis (Assam macaque).